A 295-amino-acid chain; its full sequence is Maintenance of mitochondrial morphology protein 1 (295 aa).

Over 1 to 12 (MVQLFHLTFTQG) the chain is Lumenal. Residues 13–33 (FFIGQLSVIVIVYIFLRFFLF) form a helical membrane-spanning segment. Over 34–295 (CTKEELKNVQ…REGHRQKSTE (262 aa)) the chain is Cytoplasmic. The SMP-LTD domain maps to 81–278 (EEESLDWFNV…SPQFQQISIP (198 aa)).

Belongs to the MMM1 family. As to quaternary structure, homodimer. Component of the ER-mitochondria encounter structure (ERMES) or MDM complex, composed of mmm1, mdm10, mdm12 and mdm34. A mmm1 homodimer associates with one molecule of mdm12 on each side in a pairwise head-to-tail manner, and the SMP-LTD domains of mmm1 and mdm12 generate a continuous hydrophobic tunnel for phospholipid trafficking.

It is found in the endoplasmic reticulum membrane. Component of the ERMES/MDM complex, which serves as a molecular tether to connect the endoplasmic reticulum (ER) and mitochondria. Components of this complex are involved in the control of mitochondrial shape and protein biogenesis, and function in nonvesicular lipid trafficking between the ER and mitochondria. The mdm12-mmm1 subcomplex functions in the major beta-barrel assembly pathway that is responsible for biogenesis of all outer membrane beta-barrel proteins, and acts in a late step after the SAM complex. The mdm10-mdm12-mmm1 subcomplex further acts in the TOM40-specific pathway after the action of the mdm12-mmm1 complex. Essential for establishing and maintaining the structure of mitochondria and maintenance of mtDNA nucleoids. In Schizosaccharomyces japonicus (strain yFS275 / FY16936) (Fission yeast), this protein is Maintenance of mitochondrial morphology protein 1.